The primary structure comprises 200 residues: Translation machinery-associated protein 22 (200 aa).

Positions 95-166 constitute an SUI1 domain; that stretch reads VVIRREARTK…EVEAYIHSLL (72 aa).

The protein belongs to the DENR family. In terms of assembly, interacts with the 40S ribosomal subunit.

It localises to the cytoplasm. The polypeptide is Translation machinery-associated protein 22 (TMA22) (Kluyveromyces lactis (strain ATCC 8585 / CBS 2359 / DSM 70799 / NBRC 1267 / NRRL Y-1140 / WM37) (Yeast)).